Here is a 421-residue protein sequence, read N- to C-terminus: E3 ubiquitin protein ligase DRIP1 (421 aa).

The RING-type zinc finger occupies 16–57 (CSICDNILRDATTISECLHTFCRKCIYEKITEDEIETCPVCN). 2 stretches are compositionally biased toward polar residues: residues 106 to 121 (ISSL…AQAG) and 157 to 172 (ESTS…TQNK). Disordered stretches follow at residues 106-198 (ISSL…WDSK) and 216-307 (PLKS…QERR). The span at 178-198 (SCKESISNKENKDGDEPWDSK) shows a compositional bias: basic and acidic residues. The segment covering 218 to 227 (KSSASQGSGS) has biased composition (low complexity). Over residues 244-253 (TKTKNKKRKC) the composition is skewed to basic residues. Over residues 262-271 (NGDPTTSETV) the composition is skewed to polar residues. Residues 274–284 (KRMRTTQRKRS) show a composition bias toward basic residues. The segment covering 285–294 (ATTLGDSRNL) has biased composition (polar residues).

As to quaternary structure, interacts with DREB2A. Post-translationally, autoubiquitinated. Expressed in roots, leaves and flowers.

The protein resides in the nucleus. It carries out the reaction S-ubiquitinyl-[E2 ubiquitin-conjugating enzyme]-L-cysteine + [acceptor protein]-L-lysine = [E2 ubiquitin-conjugating enzyme]-L-cysteine + N(6)-ubiquitinyl-[acceptor protein]-L-lysine.. It participates in protein modification; protein ubiquitination. In terms of biological role, E3 ubiquitin-protein ligase that acts as a negative regulator of the response to water stress. Mediates ubiquitination and subsequent proteasomal degradation of the drought-induced transcriptional activator DREB2A. Functionally redundant with DRIP2. The polypeptide is E3 ubiquitin protein ligase DRIP1 (DRIP1) (Arabidopsis thaliana (Mouse-ear cress)).